We begin with the raw amino-acid sequence, 389 residues long: Chalcone synthase 5 (389 aa).

Cys164 is a catalytic residue.

This sequence belongs to the thiolase-like superfamily. Chalcone/stilbene synthases family.

It catalyses the reaction (E)-4-coumaroyl-CoA + 3 malonyl-CoA + 3 H(+) = 2',4,4',6'-tetrahydroxychalcone + 3 CO2 + 4 CoA. It participates in secondary metabolite biosynthesis; flavonoid biosynthesis. Its function is as follows. The primary product of this enzyme is 4,2',4',6'-tetrahydroxychalcone (also termed naringenin-chalcone or chalcone) which can under specific conditions spontaneously isomerize into naringenin. The protein is Chalcone synthase 5 (CHS5) of Trifolium subterraneum (Subterranean clover).